Here is a 199-residue protein sequence, read N- to C-terminus: dITP/XTP pyrophosphatase (199 aa).

8 to 13 is a substrate binding site; that stretch reads TSNINK. The active-site Proton acceptor is Asp-68. Asp-68 is a Mg(2+) binding site. Residues Ser-69, 155-158, Lys-177, and 182-183 each bind substrate; these read FGYN and HR.

The protein belongs to the HAM1 NTPase family. In terms of assembly, homodimer. Requires Mg(2+) as cofactor.

It catalyses the reaction XTP + H2O = XMP + diphosphate + H(+). The enzyme catalyses dITP + H2O = dIMP + diphosphate + H(+). It carries out the reaction ITP + H2O = IMP + diphosphate + H(+). Pyrophosphatase that catalyzes the hydrolysis of nucleoside triphosphates to their monophosphate derivatives, with a high preference for the non-canonical purine nucleotides XTP (xanthosine triphosphate), dITP (deoxyinosine triphosphate) and ITP. Seems to function as a house-cleaning enzyme that removes non-canonical purine nucleotides from the nucleotide pool, thus preventing their incorporation into DNA/RNA and avoiding chromosomal lesions. This chain is dITP/XTP pyrophosphatase, found in Borrelia recurrentis (strain A1).